A 637-amino-acid polypeptide reads, in one-letter code: MASIEEIAHQIIEQQMGEISRSHTEVSQTALMDGTTQRIQLVPSESSVSVPQRIQIVTDPQTGQKIQIVTALDQSGTNKQFIFTNNDGSLPSKVILARQDSSQGKVFLTTPDAAGVNQLFFSTPDVPAQHIQILSDTQSLDQNLNKQFVELCVVCGDKASGRHYGAVTCEGCKGFFKRSIRKNLIYTCRGSKDCVINKHYRNRCQYCRLQRCISLGMKQDSVQCERKPIEVSREKSSNCAASTEKIYIRKDLRSPLAATTTFVTESKTSRTTSLLDSSMLVNIQQSGVKNESILLTPNKVEACQGDLSTLANVVTSLANLNKSKDLPQTNTEFSIIESLSNGDSSLSDLAQDDQSNSEVTRAFDTLAKALNQSENSTQGSSECVGSGSNLLPDVNVEIEGPLLNDVHIAFRLTMPSPMPEYLNVHYICESASRLLFLSMHWARSIPSFLSLGQENSISLVKACWNELFSLGLAQCCQVMNVETILAAFVNHLHNSMQHDKLSSDKVKLVMDHIFKLQEFCNSMVKRCVDGYEYAYLKAIALFSPDHPGLENVSHIEKLQEKAYMEFQDYVTKTYPEDTYRLSRLLLRLPALRLLNAAITEELFFAGLIGNVQIDSIIPYILRMETSDYNSQIIGLTA.

The nuclear receptor DNA-binding region spans 149–224 (VELCVVCGDK…LGMKQDSVQC (76 aa)). 2 consecutive NR C4-type zinc fingers follow at residues 152–172 (CVVCGDKASGRHYGAVTCEGC) and 188–207 (CRGSKDCVINKHYRNRCQYC). In terms of domain architecture, NR LBD spans 383–624 (CVGSGSNLLP…SIIPYILRME (242 aa)).

Belongs to the nuclear hormone receptor family. NR2 subfamily.

It localises to the nucleus. Orphan nuclear receptor. Binds the IR7 element in the promoter of its own gene in an autoregulatory negative feedback mechanism. Primarily repressor of a broad range of genes. Binds to hormone response elements (HREs) consisting of two 5'-AGGTCA-3' half site direct repeat consensus sequences. In Xenopus laevis (African clawed frog), this protein is Nuclear receptor subfamily 2 group C member 1-B (nr2c1-b).